Here is a 787-residue protein sequence, read N- to C-terminus: Alpha-glucosidase 2 (787 aa).

Catalysis depends on residues Asp407 and Glu410. The Proton donor role is filled by Asp484.

The protein belongs to the glycosyl hydrolase 31 family. Homohexamer.

It catalyses the reaction Hydrolysis of terminal, non-reducing (1-&gt;4)-linked alpha-D-glucose residues with release of alpha-D-glucose.. The protein is Alpha-glucosidase 2 of Bacillus thermoamyloliquefaciens.